Consider the following 180-residue polypeptide: ATP synthase subunit b, chloroplastic (180 aa).

Residues 28–48 (VTTLINIGVVLCLLIIFGKGF) form a helical membrane-spanning segment.

This sequence belongs to the ATPase B chain family. As to quaternary structure, F-type ATPases have 2 components, F(1) - the catalytic core - and F(0) - the membrane proton channel. F(1) has five subunits: alpha(3), beta(3), gamma(1), delta(1), epsilon(1). F(0) has four main subunits: a(1), b(1), b'(1) and c(10-14). The alpha and beta chains form an alternating ring which encloses part of the gamma chain. F(1) is attached to F(0) by a central stalk formed by the gamma and epsilon chains, while a peripheral stalk is formed by the delta, b and b' chains.

Its subcellular location is the plastid. The protein resides in the chloroplast thylakoid membrane. Its function is as follows. F(1)F(0) ATP synthase produces ATP from ADP in the presence of a proton or sodium gradient. F-type ATPases consist of two structural domains, F(1) containing the extramembraneous catalytic core and F(0) containing the membrane proton channel, linked together by a central stalk and a peripheral stalk. During catalysis, ATP synthesis in the catalytic domain of F(1) is coupled via a rotary mechanism of the central stalk subunits to proton translocation. Functionally, component of the F(0) channel, it forms part of the peripheral stalk, linking F(1) to F(0). This is ATP synthase subunit b, chloroplastic from Cuscuta obtusiflora (Peruvian dodder).